We begin with the raw amino-acid sequence, 221 residues long: Phosphoglycolate phosphatase (221 aa).

Catalysis depends on D10, which acts as the Nucleophile. Positions 10, 12, and 168 each coordinate Mg(2+).

The protein belongs to the HAD-like hydrolase superfamily. CbbY/CbbZ/Gph/YieH family. Mg(2+) is required as a cofactor.

It catalyses the reaction 2-phosphoglycolate + H2O = glycolate + phosphate. The protein operates within organic acid metabolism; glycolate biosynthesis; glycolate from 2-phosphoglycolate: step 1/1. Functionally, specifically catalyzes the dephosphorylation of 2-phosphoglycolate. Is involved in the dissimilation of the intracellular 2-phosphoglycolate formed during the DNA repair of 3'-phosphoglycolate ends, a major class of DNA lesions induced by oxidative stress. The chain is Phosphoglycolate phosphatase from Xanthomonas campestris pv. campestris (strain 8004).